Here is a 419-residue protein sequence, read N- to C-terminus: Gamma-glutamyl phosphate reductase (419 aa).

It belongs to the gamma-glutamyl phosphate reductase family.

The protein localises to the cytoplasm. The enzyme catalyses L-glutamate 5-semialdehyde + phosphate + NADP(+) = L-glutamyl 5-phosphate + NADPH + H(+). The protein operates within amino-acid biosynthesis; L-proline biosynthesis; L-glutamate 5-semialdehyde from L-glutamate: step 2/2. Catalyzes the NADPH-dependent reduction of L-glutamate 5-phosphate into L-glutamate 5-semialdehyde and phosphate. The product spontaneously undergoes cyclization to form 1-pyrroline-5-carboxylate. This chain is Gamma-glutamyl phosphate reductase, found in Solidesulfovibrio magneticus (strain ATCC 700980 / DSM 13731 / RS-1) (Desulfovibrio magneticus).